Consider the following 133-residue polypeptide: Ribonuclease VapC29 (133 aa).

Positions 3–122 (VLLDANVLIA…TLDSGLAHLH (120 aa)) constitute a PINc domain. 2 residues coordinate Mg(2+): Asp-6 and Asp-97.

Belongs to the PINc/VapC protein family. The cofactor is Mg(2+).

Its function is as follows. Toxic component of a type II toxin-antitoxin (TA) system. Its cognate antitoxin is VapB29. Has ribonuclease activity. The protein is Ribonuclease VapC29 of Mycobacterium tuberculosis (strain CDC 1551 / Oshkosh).